We begin with the raw amino-acid sequence, 460 residues long: Pyruvate dehydrogenase E1 component subunit beta (460 aa).

One can recognise a Lipoyl-binding domain in the interval 2-78; it reads PVEILMPALS…KVNTPIAVLL (77 aa). An N6-lipoyllysine modification is found at K43. The interval 91-131 is disordered; that stretch reads KTEAPKAETPKPAAAEAPAASAAPVAAQPKADVPSDPAIPA. Residues 100 to 121 are compositionally biased toward low complexity; that stretch reads PKPAAAEAPAASAAPVAAQPKA. E194 is a thiamine diphosphate binding site.

Heterodimer of an alpha and a beta chain. (R)-lipoate is required as a cofactor. Requires thiamine diphosphate as cofactor.

It carries out the reaction N(6)-[(R)-lipoyl]-L-lysyl-[protein] + pyruvate + H(+) = N(6)-[(R)-S(8)-acetyldihydrolipoyl]-L-lysyl-[protein] + CO2. Its function is as follows. The pyruvate dehydrogenase complex catalyzes the overall conversion of pyruvate to acetyl-CoA and CO(2). It contains multiple copies of three enzymatic components: pyruvate dehydrogenase (E1), dihydrolipoamide acetyltransferase (E2) and lipoamide dehydrogenase (E3). This Rhizobium meliloti (strain 1021) (Ensifer meliloti) protein is Pyruvate dehydrogenase E1 component subunit beta (pdhB).